A 529-amino-acid polypeptide reads, in one-letter code: Cytochrome P450 monooxygenase fsoB (529 aa).

Residues 4–24 (WLLSLLIAGVVFAIFQLRTVG) form a helical membrane-spanning segment. Cys436 is a heme binding site.

It belongs to the cytochrome P450 family. Heme is required as a cofactor.

It localises to the membrane. Its function is as follows. Cytochrome P450 monooxygenase; part of the gene cluster that mediates the biosynthesis of the enfumafungin-type antibiotic fuscoatroside. Four enzymes are sufficient to produce fuscoatroside: the terpene cyclase-glycosyl transferase fusion protein fsoAthe cytochrome P450 monoxygenases fsoD and fsoE, and the acetyltransferase fsoF; the cytochrome P450 monooxygenase fsoB and the glucose oxidase-like protein fsoC do not seem to play a role in biosynthesis of fuscoatroside. The sequence is that of Cytochrome P450 monooxygenase fsoB from Humicola fuscoatra.